The primary structure comprises 38 residues: MTEPNPNKQTVELNRTSLYWGLLLIFVLAILFSNYIFN.

The helical transmembrane segment at 17–37 (SLYWGLLLIFVLAILFSNYIF) threads the bilayer.

The protein belongs to the PsbL family. In terms of assembly, PSII is composed of 1 copy each of membrane proteins PsbA, PsbB, PsbC, PsbD, PsbE, PsbF, PsbH, PsbI, PsbJ, PsbK, PsbL, PsbM, PsbT, PsbX, PsbY, PsbZ, Psb30/Ycf12, at least 3 peripheral proteins of the oxygen-evolving complex and a large number of cofactors. It forms dimeric complexes.

The protein resides in the plastid. The protein localises to the chloroplast thylakoid membrane. Its function is as follows. One of the components of the core complex of photosystem II (PSII). PSII is a light-driven water:plastoquinone oxidoreductase that uses light energy to abstract electrons from H(2)O, generating O(2) and a proton gradient subsequently used for ATP formation. It consists of a core antenna complex that captures photons, and an electron transfer chain that converts photonic excitation into a charge separation. This subunit is found at the monomer-monomer interface and is required for correct PSII assembly and/or dimerization. This chain is Photosystem II reaction center protein L, found in Chlorokybus atmophyticus (Soil alga).